Consider the following 278-residue polypeptide: Large ribosomal subunit protein uL2 (278 aa).

Composition is skewed to basic residues over residues 210-220 (GRMRWKGKRPS) and 257-278 (TRRKHKPSDKLIVRRRKSNKKR). The interval 210–278 (GRMRWKGKRP…VRRRKSNKKR (69 aa)) is disordered.

It belongs to the universal ribosomal protein uL2 family. In terms of assembly, part of the 50S ribosomal subunit. Forms a bridge to the 30S subunit in the 70S ribosome.

In terms of biological role, one of the primary rRNA binding proteins. Required for association of the 30S and 50S subunits to form the 70S ribosome, for tRNA binding and peptide bond formation. It has been suggested to have peptidyltransferase activity; this is somewhat controversial. Makes several contacts with the 16S rRNA in the 70S ribosome. This chain is Large ribosomal subunit protein uL2, found in Acidothermus cellulolyticus (strain ATCC 43068 / DSM 8971 / 11B).